A 238-amino-acid polypeptide reads, in one-letter code: Large ribosomal subunit protein uL2 (238 aa).

The tract at residues 198 to 238 (NHPHGGGSHQSPSFPTTVSRNAPPGRKVGHIAARSTGRRKR) is disordered. Residues 206 to 217 (HQSPSFPTTVSR) are compositionally biased toward polar residues.

This sequence belongs to the universal ribosomal protein uL2 family. In terms of assembly, part of the 50S ribosomal subunit. Forms a bridge to the 30S subunit in the 70S ribosome.

One of the primary rRNA binding proteins. Required for association of the 30S and 50S subunits to form the 70S ribosome, for tRNA binding and peptide bond formation. It has been suggested to have peptidyltransferase activity; this is somewhat controversial. Makes several contacts with the 16S rRNA in the 70S ribosome. In Hyperthermus butylicus (strain DSM 5456 / JCM 9403 / PLM1-5), this protein is Large ribosomal subunit protein uL2.